The sequence spans 212 residues: uncharacterized protein (212 aa).

3 Pentapeptide repeat domains span residues 63-102 (VSFR…KMVG), 103-142 (MNVA…ALMQ), and 143-182 (SECS…RFEQ).

This is an uncharacterized protein from Bacillus subtilis (strain 168).